The primary structure comprises 218 residues: Ribosomal RNA small subunit methyltransferase J (218 aa).

S-adenosyl-L-methionine is bound by residues 55 to 56, 71 to 72, and aspartate 123; these read RD and ER.

This sequence belongs to the methyltransferase superfamily. RsmJ family.

It is found in the cytoplasm. It catalyses the reaction guanosine(1516) in 16S rRNA + S-adenosyl-L-methionine = N(2)-methylguanosine(1516) in 16S rRNA + S-adenosyl-L-homocysteine + H(+). In terms of biological role, specifically methylates the guanosine in position 1516 of 16S rRNA. The chain is Ribosomal RNA small subunit methyltransferase J from Rhodopseudomonas palustris (strain HaA2).